The sequence spans 38 residues: Large ribosomal subunit protein bL36 (38 aa).

The protein belongs to the bacterial ribosomal protein bL36 family.

This chain is Large ribosomal subunit protein bL36, found in Buchnera aphidicola subsp. Schizaphis graminum (strain Sg).